Reading from the N-terminus, the 75-residue chain is Large ribosomal subunit protein uL29 (75 aa).

This sequence belongs to the universal ribosomal protein uL29 family.

This is Large ribosomal subunit protein uL29 from Ureaplasma urealyticum serovar 10 (strain ATCC 33699 / Western).